Reading from the N-terminus, the 113-residue chain is Non-specific lipid-transfer protein (113 aa).

The signal sequence occupies residues 1–24 (AQVMLMAVALVLMLAAVPRAAVAI). Cystine bridges form between cysteine 26–cysteine 73, cysteine 36–cysteine 50, cysteine 51–cysteine 96, and cysteine 71–cysteine 110. Aspartate 30 carries Cis-14-hydroxy-10,13-dioxo-7-heptadecenoic acid aspartate ester lipidation.

The protein belongs to the plant LTP family.

In terms of biological role, plant non-specific lipid-transfer proteins transfer phospholipids as well as galactolipids across membranes. May play a role in wax or cutin deposition in the cell walls of expanding epidermal cells and certain secretory tissues. This is Non-specific lipid-transfer protein from Triticum aestivum (Wheat).